The following is a 342-amino-acid chain: S-adenosylmethionine:tRNA ribosyltransferase-isomerase (342 aa).

This sequence belongs to the QueA family. In terms of assembly, monomer.

The protein resides in the cytoplasm. The catalysed reaction is 7-aminomethyl-7-carbaguanosine(34) in tRNA + S-adenosyl-L-methionine = epoxyqueuosine(34) in tRNA + adenine + L-methionine + 2 H(+). Its pathway is tRNA modification; tRNA-queuosine biosynthesis. Transfers and isomerizes the ribose moiety from AdoMet to the 7-aminomethyl group of 7-deazaguanine (preQ1-tRNA) to give epoxyqueuosine (oQ-tRNA). This chain is S-adenosylmethionine:tRNA ribosyltransferase-isomerase, found in Bacillus pumilus (strain SAFR-032).